Consider the following 416-residue polypeptide: Transmembrane protease serine 11B (416 aa).

Over 1–17 the chain is Cytoplasmic; the sequence is MYRHGISSQRSWPLWTT. The helical; Signal-anchor for type II membrane protein transmembrane segment at 18-38 threads the bilayer; it reads IFIFLGVAAILGVTIGLLVHF. At 39-416 the chain is on the extracellular side; it reads LAVEKTYYYQ…RNWITSKTGL (378 aa). The SEA domain maps to 43–160; it reads KTYYYQGDFH…ASIKLMEISK (118 aa). N-linked (GlcNAc...) asparagine glycosylation is found at asparagine 72 and asparagine 107. The region spanning 185-415 is the Peptidase S1 domain; sequence IVNGKSSLEG…YRNWITSKTG (231 aa). A disulfide bond links cysteine 210 and cysteine 226. Catalysis depends on charge relay system residues histidine 225 and aspartate 270. Asparagine 315 is a glycosylation site (N-linked (GlcNAc...) asparagine). Cystine bridges form between cysteine 335-cysteine 351 and cysteine 362-cysteine 391. The Charge relay system role is filled by serine 366.

The protein belongs to the peptidase S1 family.

The protein resides in the cell membrane. Inhibited by aprotinin, leupeptin, benzamidine, SERPINA1, SPINT1 and SPINT2. Its function is as follows. Serine protease. This is Transmembrane protease serine 11B (TMPRSS11B) from Homo sapiens (Human).